Here is a 798-residue protein sequence, read N- to C-terminus: MEQRWGLLRRVQQWSPRPSQTIYRRVEGPQLEHLEEEDREEGAELPAQFCPMELKGPEHLGSCPGRSIPIPWAAAGRKAAPYLVLITLLIFTGAFLLGYVAFRGSCQACGDSVLVVDEDVNPEDSGRTTLYWSDLQAMFLRFLGEGRMEDTIRLTSLRERVAGSARMATLVQDILDKLSRQKLDHVWTDTHYVGLQFPDPAHANTLHWVDADGSVQEQLPLEDPEVYCPYSATGNATGKLVYAHYGRSEDLQDLKAKGVELAGSLLLVRVGITSFAQKVAVAQDFGAQGVLIYPDPSDFSQDPHKPGLSSHQAVYGHVHLGTGDPYTPGFPSFNQTQFPPVESSGLPSIPAQPISADIADQLLRKLTGPVAPQEWKGHLSGSPYRLGPGPDLRLVVNNHRVSTPISNIFACIEGFAEPDHYVVIGAQRDAWGPGAAKSAVGTAILLELVRTFSSMVSNGFRPRRSLLFISWDGGDFGSVGATEWLEGYLSVLHLKAVVYVSLDNSVLGDGKFHAKTSPLLVSLIENILKQVDSPNHSGQTLYEQVALTHPSWDAEVIQPLPMDSSAYSFTAFAGVPAVEFSFMEDDRVYPFLHTKEDTYENLHKMLRGRLPAVVQAVAQLAGQLLIRLSHDHLLPLDFGRYGDVVLRHIGNLNEFSGDLKERGLTLQWVYSARGDYIRAAEKLRKEIYSSERNDERLMRMYNVRIMRVEFYFLSQYVSPADSPFRHIFLGQGDHTLGALVDHLRMLRADGSGAASSRLTAGLGFQESRFRRQLALLTWTLQGAANALSGDVWNIDNNF.

Residues 1 to 81 (MEQRWGLLRR…WAAAGRKAAP (81 aa)) are Cytoplasmic-facing. The Endocytosis signal motif lies at 23–26 (YRRV). The helical; Signal-anchor for type II membrane protein transmembrane segment at 82-102 (YLVLITLLIFTGAFLLGYVAF) threads the bilayer. Residues 103–798 (RGSCQACGDS…GDVWNIDNNF (696 aa)) are Extracellular-facing. Residues Asn235, Asn334, and Asn535 are each glycosylated (N-linked (GlcNAc...) asparagine).

Belongs to the peptidase M28 family. M28B subfamily. In terms of tissue distribution, predominantly expressed in liver. Also expressed in kidney, spleen, brain, lung, heart and muscle with very low expression in kidney, muscle and heart.

Its subcellular location is the cell membrane. The protein localises to the cytoplasm. Functionally, mediates cellular uptake of transferrin-bound iron in a non-iron dependent manner. May be involved in iron metabolism, hepatocyte function and erythrocyte differentiation. The chain is Transferrin receptor protein 2 (Tfr2) from Mus musculus (Mouse).